Reading from the N-terminus, the 452-residue chain is Heat shock protein 83 (452 aa).

Arg124 is a binding site for ATP. Residues 448-452 (MEQVD) carry the TPR repeat-binding motif.

The protein belongs to the heat shock protein 90 family. Homodimer.

It is found in the cytoplasm. In terms of biological role, molecular chaperone that promotes the maturation, structural maintenance and proper regulation of specific target proteins involved for instance in cell cycle control and signal transduction. Undergoes a functional cycle that is linked to its ATPase activity. This cycle probably induces conformational changes in the client proteins, thereby causing their activation. Interacts dynamically with various co-chaperones that modulate its substrate recognition, ATPase cycle and chaperone function. This chain is Heat shock protein 83 (HSP83), found in Leishmania donovani.